The sequence spans 119 residues: Beta-2-microglobulin (119 aa).

Positions 1-20 are cleaved as a signal peptide; it reads MARFVVVALLVQLSLFGLEA. Residues 25–114 enclose the Ig-like C1-type domain; sequence PKIQVYSRYP…VTFSTPKTVK (90 aa). Cys-45 and Cys-100 form a disulfide bridge.

It belongs to the beta-2-microglobulin family. As to quaternary structure, heterodimer of an alpha chain and a beta chain. Beta-2-microglobulin is the beta-chain of major histocompatibility complex class I molecules.

The protein localises to the secreted. Functionally, component of the class I major histocompatibility complex (MHC). Involved in the presentation of peptide antigens to the immune system. The polypeptide is Beta-2-microglobulin (B2M) (Saguinus imperator (Emperor tamarin)).